The chain runs to 107 residues: uncharacterized protein (107 aa).

Residues 23-64 are disordered; sequence SASSSSSTRIPSGFASATSSKSNSSTKSSPSPINSFNNKTNN. Positions 37–57 are enriched in low complexity; sequence ASATSSKSNSSTKSSPSPINS. Residues 76–98 traverse the membrane as a helical segment; it reads LAFGIVEFMVFNGMISTITTTTF.

It localises to the membrane. This is an uncharacterized protein from Dictyostelium discoideum (Social amoeba).